The primary structure comprises 206 residues: MELKVTTLEGKEAGSVQLSDAIFGLEPRADIIQRCVQWQLNKRQAGTHKAKGRAEIWRTGKKMYKQKGTGGARHGSARVPQFRGGGRAFGPVVRSHATDLPKKVRALALKHALSAKAKDGDLVVLENATLEAAKTKALIGHFSGLGLTNALIIDGAELHNGFAAAARNIPNLDVLPIQGINVYDILRRQKLVLTKAAIDALEARFK.

This sequence belongs to the universal ribosomal protein uL4 family. As to quaternary structure, part of the 50S ribosomal subunit.

In terms of biological role, one of the primary rRNA binding proteins, this protein initially binds near the 5'-end of the 23S rRNA. It is important during the early stages of 50S assembly. It makes multiple contacts with different domains of the 23S rRNA in the assembled 50S subunit and ribosome. Functionally, forms part of the polypeptide exit tunnel. This chain is Large ribosomal subunit protein uL4, found in Bradyrhizobium sp. (strain ORS 278).